We begin with the raw amino-acid sequence, 110 residues long: uncharacterized protein (110 aa).

2 disordered regions span residues 1-42 and 66-110; these read MEWG…RAQQ and RQLG…AAEP. A coiled-coil region spans residues 36 to 68; the sequence is REERAQQLLDAVEQRQRQLLDTIAACEEMLRQL.

This is an uncharacterized protein from Homo sapiens (Human).